Here is a 307-residue protein sequence, read N- to C-terminus: Aspartate carbamoyltransferase catalytic subunit (307 aa).

The carbamoyl phosphate site is built by Arg59 and Thr60. Position 87 (Lys87) interacts with L-aspartate. The carbamoyl phosphate site is built by Arg109, His139, and Gln142. L-aspartate is bound by residues Arg172 and Arg224. Residues Ala265 and Pro266 each contribute to the carbamoyl phosphate site.

It belongs to the aspartate/ornithine carbamoyltransferase superfamily. ATCase family. As to quaternary structure, heterododecamer (2C3:3R2) of six catalytic PyrB chains organized as two trimers (C3), and six regulatory PyrI chains organized as three dimers (R2).

The enzyme catalyses carbamoyl phosphate + L-aspartate = N-carbamoyl-L-aspartate + phosphate + H(+). It participates in pyrimidine metabolism; UMP biosynthesis via de novo pathway; (S)-dihydroorotate from bicarbonate: step 2/3. In terms of biological role, catalyzes the condensation of carbamoyl phosphate and aspartate to form carbamoyl aspartate and inorganic phosphate, the committed step in the de novo pyrimidine nucleotide biosynthesis pathway. The chain is Aspartate carbamoyltransferase catalytic subunit from Streptococcus agalactiae serotype Ia (strain ATCC 27591 / A909 / CDC SS700).